The sequence spans 795 residues: Phenylalanine--tRNA ligase beta subunit (795 aa).

The region spanning A39–R148 is the tRNA-binding domain. One can recognise a B5 domain in the interval P401–N476. D454, D460, E463, and E464 together coordinate Mg(2+). The 94-residue stretch at S701–R794 folds into the FDX-ACB domain.

Belongs to the phenylalanyl-tRNA synthetase beta subunit family. Type 1 subfamily. In terms of assembly, tetramer of two alpha and two beta subunits. Mg(2+) is required as a cofactor.

It localises to the cytoplasm. The enzyme catalyses tRNA(Phe) + L-phenylalanine + ATP = L-phenylalanyl-tRNA(Phe) + AMP + diphosphate + H(+). The protein is Phenylalanine--tRNA ligase beta subunit of Vibrio vulnificus (strain CMCP6).